We begin with the raw amino-acid sequence, 535 residues long: MSVRVLNPNAEVLNKSAALHMTINAAKGLQDVLKSNLGPKGTIKMLVGGSGDIKLTKDGNTLLKEMQIQNPTAIMIARTAVAQDDISGDGTTSTVIFIGELMKQSERCIDEGMHPRVLVDGFEIAKRATLQFLDNFKTPVVMGDEVDKEILKMVARTTLRTKLYEGLADQLTDIVVNSVLCIRKPEEAIDLFMVEIMHMRHKFDVDTRLVEGLVLDHGSRHPDMKRRAENCHILTCNVSLEYEKSEINAGFFYSNAEQREAMVTAERRSVDERVKKIIELKKKVCGDNDNFVVINQKGIDPPSLDLLAREGIIGLRRAKRRNMERLVLACGGEAVNSVDDLTPESLGWAGLVYEHVLGEEKYTFVEQVKNPNSCTILIKGPNDHTIAQIKDAVRDGLRSVKNTIEDECVVLGAGAFEVAARQHLLNEVKKTVQGRAQLGVEAFANALLVVPKTLAENAGLDTQDVIISLTSEHDKGNVVGLNLQDGEPIDPQLAGIFDNYSVKRQLINSGPVIASQLLLVDEVIRAGRNMRKPTA.

This sequence belongs to the TCP-1 chaperonin family. In terms of assembly, heterooligomeric complex of about 850 to 900 kDa that forms two stacked rings, 12 to 16 nm in diameter.

The protein resides in the cytoplasm. Its function is as follows. Molecular chaperone; assists the folding of proteins upon ATP hydrolysis. Known to play a role, in vitro, in the folding of actin and tubulin. The chain is T-complex protein 1 subunit zeta 2 from Arabidopsis thaliana (Mouse-ear cress).